Reading from the N-terminus, the 282-residue chain is Probable porphobilinogen deaminase (282 aa).

Residue cysteine 233 is modified to S-(dipyrrolylmethanemethyl)cysteine.

Belongs to the HMBS family. The cofactor is dipyrromethane.

The catalysed reaction is 4 porphobilinogen + H2O = hydroxymethylbilane + 4 NH4(+). It functions in the pathway porphyrin-containing compound metabolism; protoporphyrin-IX biosynthesis; coproporphyrinogen-III from 5-aminolevulinate: step 2/4. Tetrapolymerization of the monopyrrole PBG into the hydroxymethylbilane pre-uroporphyrinogen in several discrete steps. The sequence is that of Probable porphobilinogen deaminase from Picrophilus torridus (strain ATCC 700027 / DSM 9790 / JCM 10055 / NBRC 100828 / KAW 2/3).